A 326-amino-acid polypeptide reads, in one-letter code: Vacuolar protein sorting-associated protein 26A (326 aa).

This sequence belongs to the VPS26 family. Component of the heterotrimeric retromer cargo-selective complex (CSC) which is believed to associate with variable sorting nexins to form functionally distinct retromer complex variants.

It localises to the cytoplasm. The protein resides in the endosome membrane. The protein localises to the early endosome. In terms of biological role, acts as a component of the retromer cargo-selective complex (CSC). The CSC is believed to be the core functional component of retromer or respective retromer complex variants acting to prevent missorting of selected transmembrane cargo proteins into the lysosomal degradation pathway. Retromer mediates retrograde transport of cargo proteins from endosomes to the trans-Golgi network (TGN). This is Vacuolar protein sorting-associated protein 26A (vps26a) from Xenopus tropicalis (Western clawed frog).